The following is a 74-amino-acid chain: Kappa-scoloptoxin(07)-Ssm2a (74 aa).

The N-terminal stretch at 1–19 (MLVFYALLFVTVFSNTVMG) is a signal peptide. The propeptide occupies 20–41 (ATIDKPIPKPILREAIEEIEVN).

Belongs to the scoloptoxin-07 family. Post-translationally, contains 3 disulfide bonds. Expressed by the venom gland.

It is found in the secreted. Functionally, toxin that inhibits voltage-gated potassium channel currents in DRG neurons (IC(50)=about 570 nM). In vivo, induces neurotoxicity shown by twitching, paralysis, and body contraction. In vivo, insects injected with this toxin showed signs of neurotoxicity including twitching, paralysis, and body contraction. This Scolopendra mutilans (Chinese red-headed centipede) protein is Kappa-scoloptoxin(07)-Ssm2a.